A 456-amino-acid chain; its full sequence is Myricetin 3-O-rhamnosyltransferase UGT77B2 (456 aa).

Catalysis depends on His19, which acts as the Proton acceptor. His19 contributes to the an anthocyanidin binding site. Asp116 serves as the catalytic Charge relay. An an anthocyanidin-binding site is contributed by His147. Positions 279, 334, 351, 355, and 359 each coordinate UDP-beta-L-rhamnose. Ala374 serves as a coordination point for an anthocyanidin.

Belongs to the UDP-glycosyltransferase family. As to expression, expressed in young cromes.

The catalysed reaction is myricetin + UDP-beta-L-rhamnose = myricetin 3-O-alpha-L-rhamnoside + UDP + H(+). It functions in the pathway flavonoid metabolism. Rhamnosyltransferase involved in montbretin A (MbA) biosynthesis. Catalyzes the 3-O rhamnosylation of myricetin to produce myricetin 3-O-alpha-L-rhamnoside (MR), a precursor of MbA. MbA is a potent inhibitor of human pancreatic alpha-amylase and is being developed as drug candidate to treat type-2 diabetes. In vitro, is able to transfer UDP-glucose and UDP-xylose with 50-fold less efficiency compared with UDP-rhamnose. In vitro, can use kaempferol or quercetin as substrates, although these two flavonols may not be physiological substrates in vivo. The chain is Myricetin 3-O-rhamnosyltransferase UGT77B2 from Crocosmia x crocosmiiflora (Montbretia).